The sequence spans 297 residues: MDSETHITIRNISKNSVDFVLTNTSLAVANSLRRVVLAEIPTVAIDLVEINVNTSVMPDEFLAHRLGMIPLDSSNIDEPPPVGLEYTRNCDCDQYCPKCSVELFLNAKCTGEGTMEIYARDLVVSSNSSLGHPILADPKSRGPLICKLRKEQEISLRCIAKKGIAKEHAKWSPTSAVAFEYDPWNKLQHTDYWFENDADAEWPKSKNADWEEPPREGEPFNFQEEPRRFYMDVESVGSIPPNEIMVQGLRILQEKLAVLVRDLDEEQPTQLSANELNMEENAEMNWSPYQNGEENTW.

Residues 270 to 297 (QLSANELNMEENAEMNWSPYQNGEENTW) are disordered. Positions 287–297 (SPYQNGEENTW) are enriched in polar residues.

This sequence belongs to the archaeal Rpo3/eukaryotic RPB3 RNA polymerase subunit family. In terms of assembly, component of the RNA polymerase II (Pol II) complex consisting of 12 subunits.

Its subcellular location is the nucleus. In terms of biological role, DNA-dependent RNA polymerase catalyzes the transcription of DNA into RNA using the four ribonucleoside triphosphates as substrates. Component of RNA polymerase II which synthesizes mRNA precursors and many functional non-coding RNAs. Pol II is the central component of the basal RNA polymerase II transcription machinery. It is composed of mobile elements that move relative to each other. RPB3 is part of the core element with the central large cleft and the clamp element that moves to open and close the cleft. The protein is DNA-directed RNA polymerase II subunit RPB3 (rpb3) of Schizosaccharomyces pombe (strain 972 / ATCC 24843) (Fission yeast).